The chain runs to 423 residues: UPF0229 protein Pput_0430 (423 aa).

The interval 81-108 (EFTAGEHIPRPQGGGGGGGRGKAGNSGE) is disordered. Positions 92-107 (QGGGGGGGRGKAGNSG) are enriched in gly residues.

Belongs to the UPF0229 family.

The protein is UPF0229 protein Pput_0430 of Pseudomonas putida (strain ATCC 700007 / DSM 6899 / JCM 31910 / BCRC 17059 / LMG 24140 / F1).